The following is a 297-amino-acid chain: Probable transcription factor vicR (297 aa).

Disordered regions lie at residues 45–80 and 100–134; these read LPGL…HSET and TNQA…KNVH. Residues 58-67 show a composition bias toward basic and acidic residues; that stretch reads QKEEMRRKNA. Positions 69–80 are enriched in polar residues; that stretch reads AQMQNDSNHSET. Basic and acidic residues predominate over residues 110–124; it reads RSREDITNSRAERHS.

Its subcellular location is the nucleus. Functionally, probable transcription factor; part of the gene cluster that mediates the biosynthesis of the secondary metabolite victorin, the molecular basis for Victoria blight of oats. May play a role in the regulation of the production of victorin. The sequence is that of Probable transcription factor vicR from Bipolaris victoriae (strain FI3) (Victoria blight of oats agent).